The sequence spans 421 residues: Gamma-glutamyl phosphate reductase (421 aa).

This sequence belongs to the gamma-glutamyl phosphate reductase family.

It localises to the cytoplasm. The catalysed reaction is L-glutamate 5-semialdehyde + phosphate + NADP(+) = L-glutamyl 5-phosphate + NADPH + H(+). It participates in amino-acid biosynthesis; L-proline biosynthesis; L-glutamate 5-semialdehyde from L-glutamate: step 2/2. Functionally, catalyzes the NADPH-dependent reduction of L-glutamate 5-phosphate into L-glutamate 5-semialdehyde and phosphate. The product spontaneously undergoes cyclization to form 1-pyrroline-5-carboxylate. The polypeptide is Gamma-glutamyl phosphate reductase (Pseudomonas fluorescens (strain SBW25)).